Consider the following 347-residue polypeptide: NADH-ubiquinone oxidoreductase chain 2 (347 aa).

10 consecutive transmembrane segments (helical) span residues 3 to 23, 25 to 45, 59 to 79, 96 to 116, 127 to 147, 150 to 170, 193 to 213, 240 to 260, 274 to 294, and 323 to 343; these read PIIL…TMIS, HWLL…PILM, YFLT…INTA, LVTM…FWVP, GMLL…QIFP, NPNI…WGGL, ILMY…MLTI, ITLT…LTGF, SNIM…YFYM, and IFLL…SPAL.

This sequence belongs to the complex I subunit 2 family. As to quaternary structure, core subunit of respiratory chain NADH dehydrogenase (Complex I) which is composed of 45 different subunits. Interacts with TMEM242.

The protein localises to the mitochondrion inner membrane. The catalysed reaction is a ubiquinone + NADH + 5 H(+)(in) = a ubiquinol + NAD(+) + 4 H(+)(out). Its function is as follows. Core subunit of the mitochondrial membrane respiratory chain NADH dehydrogenase (Complex I) which catalyzes electron transfer from NADH through the respiratory chain, using ubiquinone as an electron acceptor. Essential for the catalytic activity and assembly of complex I. This Lemur catta (Ring-tailed lemur) protein is NADH-ubiquinone oxidoreductase chain 2.